Here is a 267-residue protein sequence, read N- to C-terminus: Oxidoreductase ordB (267 aa).

This sequence belongs to the avfA family.

It participates in mycotoxin biosynthesis. Oxidoreductase; part of the fragmented gene cluster that mediates the biosynthesis of dothistromin (DOTH), a polyketide toxin very similar in structure to the aflatoxin precursor, versicolorin B. The first step of the pathway is the conversion of acetate to norsolorinic acid (NOR) and requires the fatty acid synthase subunits hexA and hexB, as well as the polyketide synthase pksA. PksA combines a hexanoyl starter unit and 7 malonyl-CoA extender units to synthesize the precursor NOR. The hexanoyl starter unit is provided to the acyl-carrier protein (ACP) domain by the fungal fatty acid synthase hexA/hexB. The second step is the conversion of NOR to averantin (AVN) and requires the norsolorinic acid ketoreductase nor1, which catalyzes the dehydration of norsolorinic acid to form (1'S)-averantin. The cytochrome P450 monooxygenase avnA then catalyzes the hydroxylation of AVN to 5'hydroxyaverantin (HAVN). The next step is performed by adhA that transforms HAVN to averufin (AVF). Averufin might then be converted to hydroxyversicolorone by cypX and avfA. Hydroxyversicolorone is further converted versiconal hemiacetal acetate (VHA) by moxY. VHA is then the substrate for the versiconal hemiacetal acetate esterase est1 to yield versiconal (VAL). Versicolorin B synthase vbsA then converts VAL to versicolorin B (VERB) by closing the bisfuran ring. Then, the activity of the versicolorin B desaturase verB leads to versicolorin A (VERA). DotB, a predicted chloroperoxidase, may perform epoxidation of the A-ring of VERA. Alternatively, a cytochrome P450, such as cypX or avnA could catalyze this step. It is also possible that another, uncharacterized, cytochrome P450 enzyme is responsible for this step. Opening of the epoxide could potentially be achieved by the epoxide hydrolase epoA. However, epoA seems not to be required for DOTH biosynthesis, but other epoxide hydrolases may have the ability to complement this hydrolysis. Alternatively, opening of the epoxide ring could be achieved non-enzymatically. The next step is the deoxygenation of ring A to yield the 5,8-dihydroxyanthraquinone which is most likely catalyzed by the NADPH dehydrogenase encoded by ver1. The last stages of DOTH biosynthesis are proposed to involve hydroxylation of the bisfuran. OrdB and norB might have oxidative roles here. An alternative possibility is that cytochrome P450 monoogenases such as avnA and cypX might perform these steps in addition to previously proposed steps. The polypeptide is Oxidoreductase ordB (Dothistroma septosporum (strain NZE10 / CBS 128990) (Red band needle blight fungus)).